Here is a 245-residue protein sequence, read N- to C-terminus: Thiopurine S-methyltransferase (245 aa).

Serine 14 carries the phosphoserine modification. 29 to 40 is a binding site for S-adenosyl-L-methionine; that stretch reads WREKWVDGKIGF. Position 40 (phenylalanine 40) interacts with substrate. Lysine 58 bears the N6-acetyllysine mark. Positions 69, 90, and 152 each coordinate S-adenosyl-L-methionine.

Belongs to the class I-like SAM-binding methyltransferase superfamily. TPMT family. As to quaternary structure, monomer.

It localises to the cytoplasm. It carries out the reaction S-adenosyl-L-methionine + a thiopurine = S-adenosyl-L-homocysteine + a thiopurine S-methylether.. The sequence is that of Thiopurine S-methyltransferase (TPMT) from Panthera tigris (Tiger).